A 407-amino-acid polypeptide reads, in one-letter code: Substance-P receptor (407 aa).

A disordered region spans residues 1–20 (MDNVLPVDSDLFPNTSTNTS). Topologically, residues 1 to 31 (MDNVLPVDSDLFPNTSTNTSESNQFVQPTWQ) are extracellular. Asn14 and Asn18 each carry an N-linked (GlcNAc...) asparagine glycan. A helical transmembrane segment spans residues 32–54 (IVLWAAAYTVIVVTSVVGNVVVI). At 55–64 (WIILAHKRMR) the chain is on the cytoplasmic side. Residues 65–86 (TVTNYFLVNLAFAEACMAAFNT) form a helical membrane-spanning segment. Residues 87–106 (VVNFTYAVHNVWYYGLFYCK) are Extracellular-facing. Cys105 and Cys180 are joined by a disulfide. The chain crosses the membrane as a helical span at residues 107–128 (FHNFFPIAALFASIYSMTAVAF). Residues 129 to 148 (DRYMAIIHPLQPRLSATATK) are Cytoplasmic-facing. The helical transmembrane segment at 149–169 (VVIFVIWVLALLLAFPQGYYS) threads the bilayer. The Extracellular portion of the chain corresponds to 170-194 (TTETMPSRVVCMIEWPEHPNRTYEK). A helical membrane pass occupies residues 195-219 (AYHICVTVLIYFLPLLVIGYAYTVV). Residues 220–248 (GITLWASEIPGDSSDRYHEQVSAKRKVVK) lie on the Cytoplasmic side of the membrane. A helical transmembrane segment spans residues 249–270 (MMIVVVCTFAICWLPFHIFFLL). At 271 to 283 (PYINPDLYLKKFI) the chain is on the extracellular side. The chain crosses the membrane as a helical span at residues 284–308 (QQVYLASMWLAMSSTMYNPIIYCCL). Over 309–407 (NDRFRLGFKH…SSSFYSNMLA (99 aa)) the chain is Cytoplasmic. Cys322 carries the S-palmitoyl cysteine lipid modification. The segment at 362-407 (VGAHEDEPEEGPKATPSSLDLTSNGSSRSNSKTMTESSSFYSNMLA) is disordered. Residues 376 to 407 (TPSSLDLTSNGSSRSNSKTMTESSSFYSNMLA) are compositionally biased toward polar residues.

The protein belongs to the G-protein coupled receptor 1 family. In terms of assembly, interacts with ARRB1.

The protein localises to the cell membrane. This is a receptor for the tachykinin neuropeptide substance P. It is probably associated with G proteins that activate a phosphatidylinositol-calcium second messenger system. The rank order of affinity of this receptor to tachykinins is: substance P &gt; substance K &gt; neuromedin K. This Mus musculus (Mouse) protein is Substance-P receptor (Tacr1).